The sequence spans 173 residues: Ribulose bisphosphate carboxylase small subunit, chloroplastic 5 (173 aa).

The N-terminal 49 residues, 1-49 (MASIPATVATVAQANMVAPFTGLKSNAAFPVTKKVNDFSTLPSNGGRVQ), are a transit peptide targeting the chloroplast.

This sequence belongs to the RuBisCO small chain family. In terms of assembly, heterohexadecamer of 8 large and 8 small subunits.

Its subcellular location is the plastid. It is found in the chloroplast. Functionally, ruBisCO catalyzes two reactions: the carboxylation of D-ribulose 1,5-bisphosphate, the primary event in carbon dioxide fixation, as well as the oxidative fragmentation of the pentose substrate. Both reactions occur simultaneously and in competition at the same active site. Although the small subunit is not catalytic it is essential for maximal activity. The polypeptide is Ribulose bisphosphate carboxylase small subunit, chloroplastic 5 (Flaveria pringlei).